Consider the following 389-residue polypeptide: Anhydro-N-acetylmuramic acid kinase (389 aa).

11-18 (GTSLDGVD) is an ATP binding site.

This sequence belongs to the anhydro-N-acetylmuramic acid kinase family.

It catalyses the reaction 1,6-anhydro-N-acetyl-beta-muramate + ATP + H2O = N-acetyl-D-muramate 6-phosphate + ADP + H(+). Its pathway is amino-sugar metabolism; 1,6-anhydro-N-acetylmuramate degradation. It functions in the pathway cell wall biogenesis; peptidoglycan recycling. Catalyzes the specific phosphorylation of 1,6-anhydro-N-acetylmuramic acid (anhMurNAc) with the simultaneous cleavage of the 1,6-anhydro ring, generating MurNAc-6-P. Is required for the utilization of anhMurNAc either imported from the medium or derived from its own cell wall murein, and thus plays a role in cell wall recycling. The protein is Anhydro-N-acetylmuramic acid kinase of Albidiferax ferrireducens (strain ATCC BAA-621 / DSM 15236 / T118) (Rhodoferax ferrireducens).